Reading from the N-terminus, the 185-residue chain is Putative manganese efflux pump MntP (185 aa).

Transmembrane regions (helical) follow at residues 3-23 (PFAVVLLAFSMSVDAFAVSVG), 41-61 (AVFGVVEAITPVIGWVAGVAA), 70-90 (HWLAFGLLAAVGLHMLYAAVW), 101-121 (SFTVLMATAIGTSLDAMAVGV), 123-143 (LAFLNVNIVVVATAIGLATFL), and 165-185 (AVAGIALFGLGLSILIEHLTA).

The protein belongs to the MntP (TC 9.B.29) family.

It is found in the cell inner membrane. Its function is as follows. Probably functions as a manganese efflux pump. This chain is Putative manganese efflux pump MntP, found in Bradyrhizobium sp. (strain BTAi1 / ATCC BAA-1182).